The primary structure comprises 277 residues: Diaminopimelate epimerase (277 aa).

Residues asparagine 11 and asparagine 72 each coordinate substrate. Catalysis depends on cysteine 81, which acts as the Proton donor. Substrate contacts are provided by residues glycine 82–asparagine 83, asparagine 189, and glutamate 207–arginine 208. Cysteine 217 (proton acceptor) is an active-site residue. Position 218–219 (glycine 218–threonine 219) interacts with substrate.

It belongs to the diaminopimelate epimerase family. As to quaternary structure, homodimer.

It is found in the cytoplasm. It carries out the reaction (2S,6S)-2,6-diaminopimelate = meso-2,6-diaminopimelate. It functions in the pathway amino-acid biosynthesis; L-lysine biosynthesis via DAP pathway; DL-2,6-diaminopimelate from LL-2,6-diaminopimelate: step 1/1. Its function is as follows. Catalyzes the stereoinversion of LL-2,6-diaminopimelate (L,L-DAP) to meso-diaminopimelate (meso-DAP), a precursor of L-lysine and an essential component of the bacterial peptidoglycan. In Hydrogenobaculum sp. (strain Y04AAS1), this protein is Diaminopimelate epimerase.